The following is a 149-amino-acid chain: Nucleoside diphosphate kinase (149 aa).

ATP contacts are provided by Lys-9, Phe-57, Arg-85, Thr-91, Arg-102, and Asn-112. His-115 functions as the Pros-phosphohistidine intermediate in the catalytic mechanism.

Belongs to the NDK family. Homotetramer. It depends on Mg(2+) as a cofactor.

It localises to the cytoplasm. It carries out the reaction a 2'-deoxyribonucleoside 5'-diphosphate + ATP = a 2'-deoxyribonucleoside 5'-triphosphate + ADP. The enzyme catalyses a ribonucleoside 5'-diphosphate + ATP = a ribonucleoside 5'-triphosphate + ADP. Major role in the synthesis of nucleoside triphosphates other than ATP. The ATP gamma phosphate is transferred to the NDP beta phosphate via a ping-pong mechanism, using a phosphorylated active-site intermediate. The sequence is that of Nucleoside diphosphate kinase from Nostoc punctiforme (strain ATCC 29133 / PCC 73102).